The sequence spans 325 residues: MNALTAVQNNAVDSGQDYSGFTLIPSAQSPRLLELTFTEQTTKQFLEQVAEWPVQALEYKSFLRFRVGKILDDLCANQLQPLLLKTLLNRAEGALLINAVGVDDVKQADEMVKLATAVAHLIGRSNFDAMSGQYYARFVVKNVDNSDSYLRQPHRVMELHNDGTYVEEITDYVLMMKIDEQNMQGGNSLLLHLDDWEHLDHYFRHPLARRPMRFAAPPSKNVSKDVFHPVFDVDQQGRPVMRYIDQFVQPKDFEEGVWLSELSDAIETSKGILSVPVPVGKFLLINNLFWLHGRDRFTPHPDLRRELMRQRGYFAYATNHYQTHQ.

Fe cation contacts are provided by His160, Asp162, and His292.

It belongs to the glutarate hydroxylase family. As to quaternary structure, homotetramer. Requires Fe(2+) as cofactor.

The catalysed reaction is glutarate + 2-oxoglutarate + O2 = (S)-2-hydroxyglutarate + succinate + CO2. Its pathway is amino-acid degradation. Functionally, acts as an alpha-ketoglutarate-dependent dioxygenase catalyzing hydroxylation of glutarate (GA) to L-2-hydroxyglutarate (L2HG). Functions in a L-lysine degradation pathway that proceeds via cadaverine, glutarate and L-2-hydroxyglutarate. The polypeptide is Glutarate 2-hydroxylase (Escherichia coli O7:K1 (strain IAI39 / ExPEC)).